The primary structure comprises 262 residues: Expansin-A7 (262 aa).

The N-terminal stretch at 1–30 (MGPISSSWSFNKFFSIVFVVFAISGEFVAG) is a signal peptide. The Expansin-like EG45 domain maps to 55 to 167 (GGACGYGNLF…RRVPCQRSGG (113 aa)). 3 cysteine pairs are disulfide-bonded: Cys58/Cys86, Cys89/Cys162, and Cys94/Cys100. Positions 177-257 (YWLLIFVMNV…NWSGGKTYKS (81 aa)) constitute an Expansin-like CBD domain.

Belongs to the expansin family. Expansin A subfamily.

Its subcellular location is the secreted. It localises to the cell wall. It is found in the membrane. Its function is as follows. Causes loosening and extension of plant cell walls by disrupting non-covalent bonding between cellulose microfibrils and matrix glucans. No enzymatic activity has been found. The protein is Expansin-A7 (EXPA7) of Arabidopsis thaliana (Mouse-ear cress).